Reading from the N-terminus, the 343-residue chain is Allantoicase (343 aa).

This sequence belongs to the allantoicase family.

The catalysed reaction is allantoate + H2O = (S)-ureidoglycolate + urea. It functions in the pathway nitrogen metabolism; (S)-allantoin degradation; (S)-ureidoglycolate from allantoate (aminidohydrolase route): step 1/1. In terms of biological role, utilization of purines as secondary nitrogen sources, when primary sources are limiting. This chain is Allantoicase (DAL2), found in Saccharomyces cerevisiae (strain ATCC 204508 / S288c) (Baker's yeast).